We begin with the raw amino-acid sequence, 348 residues long: UPF0324 membrane protein BPP3732 (348 aa).

A run of 10 helical transmembrane segments spans residues 20–39, 43–62, 98–120, 135–157, 164–186, 196–215, 235–257, 267–286, 299–318, and 322–344; these read GILF…DLPF, FGFS…GNFL, IAAV…LLIG, AMLT…EPTL, SAVA…PVIY, QALG…VVGA, VALL…AAGA, VPWF…LDIL, VFVL…FAQI, and GPRV…YGIV.

Belongs to the UPF0324 family.

The protein localises to the cell membrane. The sequence is that of UPF0324 membrane protein BPP3732 from Bordetella parapertussis (strain 12822 / ATCC BAA-587 / NCTC 13253).